Consider the following 84-residue polypeptide: UPF0386 protein Oant_1614 (84 aa).

The protein belongs to the UPF0386 family.

This is UPF0386 protein Oant_1614 from Brucella anthropi (strain ATCC 49188 / DSM 6882 / CCUG 24695 / JCM 21032 / LMG 3331 / NBRC 15819 / NCTC 12168 / Alc 37) (Ochrobactrum anthropi).